Consider the following 647-residue polypeptide: Beta-glucosidase-like SFR2, chloroplastic (647 aa).

Residues 116–140 form a disordered region; the sequence is SAAGDGGSQQSWRSTGGENIGDREQ. The segment covering 123–132 has biased composition (polar residues); that stretch reads SQQSWRSTGG. The N-linked (GlcNAc...) asparagine glycan is linked to Asn-169. Residues His-258, 302–303, Tyr-414, Glu-466, Trp-504, 511–512, and Phe-520 contribute to the a beta-D-glucoside site; these read NE and EW. Catalysis depends on Glu-303, which acts as the Proton donor. The active-site Nucleophile is the Glu-466.

It belongs to the glycosyl hydrolase 1 family.

It is found in the plastid. The protein resides in the chloroplast outer membrane. It catalyses the reaction 2 a 1,2-diacyl-3-O-(beta-D-galactosyl)-sn-glycerol = a 1,2-diacyl-3-O-[beta-D-galactosyl-(1-&gt;6)-beta-D-galactosyl]-sn-glycerol + a 1,2-diacyl-sn-glycerol. Its function is as follows. Galactosyltransferase synthesizing digalactosyldiacylglycerol from monogalactosyldiacylglycerol in the absence of UDP-galactose. Potentially involved in freezing tolerance. The protein is Beta-glucosidase-like SFR2, chloroplastic of Oryza sativa subsp. japonica (Rice).